We begin with the raw amino-acid sequence, 134 residues long: Holo-[acyl-carrier-protein] synthase (134 aa).

Residues Asp-8 and Glu-57 each coordinate Mg(2+).

Belongs to the P-Pant transferase superfamily. AcpS family. Requires Mg(2+) as cofactor.

The protein localises to the cytoplasm. The catalysed reaction is apo-[ACP] + CoA = holo-[ACP] + adenosine 3',5'-bisphosphate + H(+). Functionally, transfers the 4'-phosphopantetheine moiety from coenzyme A to a Ser of acyl-carrier-protein. This chain is Holo-[acyl-carrier-protein] synthase, found in Rhizobium rhizogenes (strain K84 / ATCC BAA-868) (Agrobacterium radiobacter).